A 352-amino-acid polypeptide reads, in one-letter code: tRNA uridine(34) hydroxylase (352 aa).

The region spanning 144-238 is the Rhodanese domain; that stretch reads SDPDVILIDT…YLEEVPASDS (95 aa). The active-site Cysteine persulfide intermediate is the Cys-198.

The protein belongs to the TrhO family.

It catalyses the reaction uridine(34) in tRNA + AH2 + O2 = 5-hydroxyuridine(34) in tRNA + A + H2O. In terms of biological role, catalyzes oxygen-dependent 5-hydroxyuridine (ho5U) modification at position 34 in tRNAs. This Psychrobacter arcticus (strain DSM 17307 / VKM B-2377 / 273-4) protein is tRNA uridine(34) hydroxylase.